A 260-amino-acid polypeptide reads, in one-letter code: MGFLDLPFMLKAFRFRRLVVEDGKRRKKKKPLWLTPVSHGYYTVDRLSYADNSSNDDSVFVQREQQSDELEIWLFGVSNAGTGKEIVKYMQNHLFDKLPNELGIMRKCKETMRRAYVEEERTGGSAASVMVVNGEKLAIASIGDHRVVVCKDGEAHQIRDRKASTKHWSQFIFPVCNQGEEEDESDPRNSELVVITEKINSDTEFIIIGSPGIWEVMKSQEAINLIRHIEDPKEAAKCLAKEALNRISKSSISCVVIRFG.

The region spanning 41–259 (YYTVDRLSYA…SSISCVVIRF (219 aa)) is the PPM-type phosphatase domain.

The protein belongs to the PP2C family.

The polypeptide is Putative protein phosphatase 2C-like protein 44 (Arabidopsis thaliana (Mouse-ear cress)).